Here is a 95-residue protein sequence, read N- to C-terminus: Small ribosomal subunit protein bS18 (95 aa).

Belongs to the bacterial ribosomal protein bS18 family. Part of the 30S ribosomal subunit. Forms a tight heterodimer with protein bS6.

Its function is as follows. Binds as a heterodimer with protein bS6 to the central domain of the 16S rRNA, where it helps stabilize the platform of the 30S subunit. The polypeptide is Small ribosomal subunit protein bS18 (Acidiphilium cryptum (strain JF-5)).